The following is a 110-amino-acid chain: Large ribosomal subunit protein uL23c (110 aa).

It belongs to the universal ribosomal protein uL23 family. As to quaternary structure, part of the 50S ribosomal subunit.

Its subcellular location is the plastid. The protein resides in the chloroplast. Binds to 23S rRNA. The sequence is that of Large ribosomal subunit protein uL23c (rpl23) from Porphyra purpurea (Red seaweed).